The primary structure comprises 76 residues: Heat shock factor-binding protein 1 (76 aa).

This sequence belongs to the HSBP1 family. As to quaternary structure, homohexamer. Associates with heptad repeats of HSF1 trimers and probably also HSF1 monomers, and with HSP70. Association with HSF1 trimers and HSP70 coincides with attenuation of heat shock response and the conversion of HSF1 trimer to monomer.

The protein localises to the nucleus. In terms of biological role, negative regulator of the heat shock response. Negatively affects HSF1 DNA-binding activity. May have a role in the suppression of the activation of the stress response during the aging process. This is Heat shock factor-binding protein 1 (HSBP1) from Pongo abelii (Sumatran orangutan).